Consider the following 107-residue polypeptide: Small polypeptide DEVIL 9 (107 aa).

A compositionally biased stretch (basic and acidic residues) spans 1 to 12; the sequence is MDEKWRLSKKDA. Residues 1–79 are disordered; sequence MDEKWRLSKK…EKGSITQKYS (79 aa). A helical membrane pass occupies residues 9–29; it reads KKDALAASCSSSSTSSKSKFS. A compositionally biased stretch (low complexity) spans 13–65; sequence LAASCSSSSTSSKSKFSRSFSTSASSSKAPAFVRSSSTKCSVPSSSSSSISRS. The tract at residues 73–104 is required for DVL/RTFL small polypeptide activity; the sequence is SITQKYSSLAKEQKGRFYIMRRCVAMLVCWHK.

The protein belongs to the DVL/RTFL small polypeptides family.

The protein localises to the cell membrane. Its function is as follows. Small polypeptide acting as a regulatory molecule which coordinates cellular responses required for differentiation, growth and development, probably by restricting polar cell proliferation in lateral organs and coordinating socket cell recruitment and differentiation at trichome sites. The polypeptide is Small polypeptide DEVIL 9 (Arabidopsis thaliana (Mouse-ear cress)).